The chain runs to 146 residues: Hemoglobin subunit beta (146 aa).

The 145-residue stretch at 2-146 (HWSAEEKQLI…VAHALARKYH (145 aa)) folds into the Globin domain. Residues His-63 and His-92 each contribute to the heme b site.

It belongs to the globin family. As to quaternary structure, heterotetramer of two alpha chains and two beta chains. As to expression, red blood cells.

In terms of biological role, involved in oxygen transport from the lung to the various peripheral tissues. The chain is Hemoglobin subunit beta (HBB) from Phasianus colchicus colchicus (Black-necked pheasant).